Consider the following 465-residue polypeptide: Indoleacetamide hydrolase (465 aa).

Residues 1–40 (MVRGRHRSRDPQRRDLRGRDRRSASRTDARRQSAAERGCR) are disordered. The span at 9-39 (RDPQRRDLRGRDRRSASRTDARRQSAAERGC) shows a compositional bias: basic and acidic residues. Ser-149 functions as the Charge relay system in the catalytic mechanism. The active-site Acyl-ester intermediate is the Ser-173.

The protein belongs to the amidase family.

Its pathway is plant hormone metabolism; auxin biosynthesis. Functionally, hydrolyzes indole-3-acetamide (IAM) into indole-3-acetic acid (IAA). The chain is Indoleacetamide hydrolase (bam) from Bradyrhizobium japonicum.